The sequence spans 354 residues: MFDKIEELERRYQELEALLSDPAVISNQPEFRKLSREHADLTGLVAAYRRYRRVLEEMEGNRELLADVDMKEMAEEELKVLEEEKERLEGEIQMLLLPRDPNDDKSVILEIRAGTGGDESALFAGDLFRMYSRFADVNRWKVETISASESERGGFKEIIASVEGEGVFAKLKYESGTHRVQRVPETEAQGRIHTSACTVAIMAEAEDVDIDINPTDLKIDVYRSSGAGGQHVNTTDSAVRITHLPTGTVVACQEERSQIKNRAKAMKVLKTRIMDSIQQEQNARMAADRKQQVGSGDRSERIRTYNFPQGRMTDHRIGLTLYRLDAIMAGDIAEIVDALRAHYQMEALKAQSEE.

Residue Gln230 is modified to N5-methylglutamine.

This sequence belongs to the prokaryotic/mitochondrial release factor family. Post-translationally, methylated by PrmC. Methylation increases the termination efficiency of RF1.

It is found in the cytoplasm. Functionally, peptide chain release factor 1 directs the termination of translation in response to the peptide chain termination codons UAG and UAA. The chain is Peptide chain release factor 1 from Pelobacter propionicus (strain DSM 2379 / NBRC 103807 / OttBd1).